A 279-amino-acid chain; its full sequence is NADPH-dependent 7-cyano-7-deazaguanine reductase (279 aa).

86 to 88 (IES) is a substrate binding site. 88 to 89 (SK) serves as a coordination point for NADPH. Residue Cys187 is the Thioimide intermediate of the active site. Asp194 acts as the Proton donor in catalysis. Substrate is bound at residue 226–227 (HE). Position 255–256 (255–256 (RG)) interacts with NADPH.

This sequence belongs to the GTP cyclohydrolase I family. QueF type 2 subfamily. Homodimer.

It is found in the cytoplasm. It carries out the reaction 7-aminomethyl-7-carbaguanine + 2 NADP(+) = 7-cyano-7-deazaguanine + 2 NADPH + 3 H(+). The protein operates within tRNA modification; tRNA-queuosine biosynthesis. Its function is as follows. Catalyzes the NADPH-dependent reduction of 7-cyano-7-deazaguanine (preQ0) to 7-aminomethyl-7-deazaguanine (preQ1). This Haemophilus influenzae (strain PittGG) protein is NADPH-dependent 7-cyano-7-deazaguanine reductase.